We begin with the raw amino-acid sequence, 181 residues long: Isopentenyl-diphosphate Delta-isomerase (181 aa).

Residues H25 and H32 each contribute to the Mn(2+) site. Residues 30–164 (PLHLAFSCWL…PWAFSPWMVM (135 aa)) enclose the Nudix hydrolase domain. Residue C67 is part of the active site. H69 is a Mn(2+) binding site. E87 lines the Mg(2+) pocket. Residues E114 and E116 each coordinate Mn(2+). The active site involves E116.

It belongs to the IPP isomerase type 1 family. Homodimer. Mg(2+) serves as cofactor. It depends on Mn(2+) as a cofactor.

Its subcellular location is the cytoplasm. The enzyme catalyses isopentenyl diphosphate = dimethylallyl diphosphate. It participates in isoprenoid biosynthesis; dimethylallyl diphosphate biosynthesis; dimethylallyl diphosphate from isopentenyl diphosphate: step 1/1. Its function is as follows. Catalyzes the 1,3-allylic rearrangement of the homoallylic substrate isopentenyl (IPP) to its highly electrophilic allylic isomer, dimethylallyl diphosphate (DMAPP). In Salmonella agona (strain SL483), this protein is Isopentenyl-diphosphate Delta-isomerase.